The following is a 186-amino-acid chain: NADH-quinone oxidoreductase subunit B 2 (186 aa).

The tract at residues 1–27 (MPSFTQPHSAPRNFQFPGQQRQGDPTM) is disordered. Residues cysteine 65, cysteine 66, cysteine 130, and cysteine 160 each contribute to the [4Fe-4S] cluster site.

This sequence belongs to the complex I 20 kDa subunit family. In terms of assembly, NDH-1 is composed of 14 different subunits. Subunits NuoB, C, D, E, F, and G constitute the peripheral sector of the complex. The cofactor is [4Fe-4S] cluster.

It is found in the cell inner membrane. It catalyses the reaction a quinone + NADH + 5 H(+)(in) = a quinol + NAD(+) + 4 H(+)(out). Its function is as follows. NDH-1 shuttles electrons from NADH, via FMN and iron-sulfur (Fe-S) centers, to quinones in the respiratory chain. The immediate electron acceptor for the enzyme in this species is believed to be ubiquinone. Couples the redox reaction to proton translocation (for every two electrons transferred, four hydrogen ions are translocated across the cytoplasmic membrane), and thus conserves the redox energy in a proton gradient. The sequence is that of NADH-quinone oxidoreductase subunit B 2 from Rhizobium etli (strain ATCC 51251 / DSM 11541 / JCM 21823 / NBRC 15573 / CFN 42).